A 388-amino-acid chain; its full sequence is S-adenosylmethionine synthase (388 aa).

H16 provides a ligand contact to ATP. Residue D18 participates in Mg(2+) binding. Residue E44 coordinates K(+). L-methionine is bound by residues E57 and Q100. The segment at 100 to 110 is flexible loop; sequence QSPEIAQGVDR. Residues 165 to 167, D240, 246 to 247, A263, and K267 each bind ATP; these read DAK and RK. D240 lines the L-methionine pocket. K271 is an L-methionine binding site.

It belongs to the AdoMet synthase family. As to quaternary structure, homotetramer; dimer of dimers. Mg(2+) serves as cofactor. The cofactor is K(+).

The protein localises to the cytoplasm. The enzyme catalyses L-methionine + ATP + H2O = S-adenosyl-L-methionine + phosphate + diphosphate. It participates in amino-acid biosynthesis; S-adenosyl-L-methionine biosynthesis; S-adenosyl-L-methionine from L-methionine: step 1/1. Functionally, catalyzes the formation of S-adenosylmethionine (AdoMet) from methionine and ATP. The overall synthetic reaction is composed of two sequential steps, AdoMet formation and the subsequent tripolyphosphate hydrolysis which occurs prior to release of AdoMet from the enzyme. The chain is S-adenosylmethionine synthase from Acinetobacter baumannii (strain ACICU).